We begin with the raw amino-acid sequence, 133 residues long: Small ribosomal subunit protein uS9 (133 aa).

Residues 114-133 (VERKKYGKKKARRSPQFSKR) are disordered. Basic residues predominate over residues 118–133 (KYGKKKARRSPQFSKR).

The protein belongs to the universal ribosomal protein uS9 family.

This chain is Small ribosomal subunit protein uS9, found in Fusobacterium nucleatum subsp. nucleatum (strain ATCC 25586 / DSM 15643 / BCRC 10681 / CIP 101130 / JCM 8532 / KCTC 2640 / LMG 13131 / VPI 4355).